Consider the following 76-residue polypeptide: Protein CYSTEINE-RICH TRANSMEMBRANE MODULE 11 (76 aa).

Residues 19–45 (GPPPPVGVPPQYYPPPPPPPPPPPPPR) form a disordered region. Residues 47–63 (VGFLEGLLAALCCCCLV) form a helical membrane-spanning segment.

Belongs to the CYSTM1 family. As to quaternary structure, heterodimers. Interacts with CYSTM6, CYSTM7 and WIH1/CYSTM13. As to expression, mostly expressed in stems, siliques, leaves and flowers and, to a lower extent, in roots.

The protein localises to the cell membrane. It localises to the cytoplasm. Its function is as follows. Involved in resistance to abiotic stress. This is Protein CYSTEINE-RICH TRANSMEMBRANE MODULE 11 from Arabidopsis thaliana (Mouse-ear cress).